Here is a 332-residue protein sequence, read N- to C-terminus: MQHLFEKLFRAESMSQEESQQLFAAIVRGELEPSQLAAVLISMKVRGETPAEIAGAAQALLADAQHFPRPDYLFADIVGTGGDGTNSINISTASAFVAASCGVKVAKHGNRSVSSRSGSSDLLAAFGIRLDMSAEQSRLALDDLGVCFLFAPQYHTGFRHAMPVRQQLKTRTLFNVLGPLINPARPPLALIGVYSPELVLPIAQTLKVLGYQRAAVVHGGGMDEVAIHAPTQVAELNNGSIESYQLTPEDFGLNRYPLAALQGGMPEENRDILARLLQGKGETAHAAAVAANVALLLKLYGQENLRHNAQQALEMIHSGQAFDRVTALAARG.

5-phospho-alpha-D-ribose 1-diphosphate contacts are provided by residues G79, 82–83 (GD), S87, 89–92 (NIST), 107–115 (KHGNRSVSS), and S119. G79 contributes to the anthranilate binding site. Mg(2+) is bound at residue S91. N110 is a binding site for anthranilate. An anthranilate-binding site is contributed by R165. Mg(2+) contacts are provided by D223 and E224.

This sequence belongs to the anthranilate phosphoribosyltransferase family. Homodimer. The cofactor is Mg(2+).

It carries out the reaction N-(5-phospho-beta-D-ribosyl)anthranilate + diphosphate = 5-phospho-alpha-D-ribose 1-diphosphate + anthranilate. It functions in the pathway amino-acid biosynthesis; L-tryptophan biosynthesis; L-tryptophan from chorismate: step 2/5. Its function is as follows. Catalyzes the transfer of the phosphoribosyl group of 5-phosphorylribose-1-pyrophosphate (PRPP) to anthranilate to yield N-(5'-phosphoribosyl)-anthranilate (PRA). The polypeptide is Anthranilate phosphoribosyltransferase (Yersinia pestis bv. Antiqua (strain Antiqua)).